Here is a 101-residue protein sequence, read N- to C-terminus: Small ribosomal subunit protein uS14 (101 aa).

The protein belongs to the universal ribosomal protein uS14 family. In terms of assembly, part of the 30S ribosomal subunit. Contacts proteins S3 and S10.

Its function is as follows. Binds 16S rRNA, required for the assembly of 30S particles and may also be responsible for determining the conformation of the 16S rRNA at the A site. This is Small ribosomal subunit protein uS14 from Phenylobacterium zucineum (strain HLK1).